A 477-amino-acid chain; its full sequence is Regulatory protein HrpB (477 aa).

An HTH araC/xylS-type domain is found at 375-477; sequence RRAYRYIIEN…NEAPSETIWR (103 aa). DNA-binding regions (H-T-H motif) lie at residues 393–414 and 444–467; these read REVA…KSAV and IIDT…RKQF.

Positive regulation of hypersensitive response genes involved in plant pathogenicity and partly of its own synthesis in minimal medium. This chain is Regulatory protein HrpB (hrpB), found in Ralstonia nicotianae (strain ATCC BAA-1114 / GMI1000) (Ralstonia solanacearum).